We begin with the raw amino-acid sequence, 612 residues long: Chaperone protein DnaK (612 aa).

Threonine 173 carries the phosphothreonine; by autocatalysis modification. Positions alanine 576–lysine 612 are disordered. The span at asparagine 596 to lysine 612 shows a compositional bias: acidic residues.

The protein belongs to the heat shock protein 70 family.

Acts as a chaperone. The polypeptide is Chaperone protein DnaK (Bacillus licheniformis (strain ATCC 14580 / DSM 13 / JCM 2505 / CCUG 7422 / NBRC 12200 / NCIMB 9375 / NCTC 10341 / NRRL NRS-1264 / Gibson 46)).